A 3573-amino-acid chain; its full sequence is Zinc finger homeobox protein 4 (3573 aa).

Positions 1-28 (METCDSPTISRQENGQSTSKLCGTTQLD) are enriched in polar residues. 3 disordered regions span residues 1–54 (METC…LRTD), 425–479 (LSHS…DTYS), and 522–606 (TSSS…GSPG). Composition is skewed to basic and acidic residues over residues 39-54 (EPDR…LRTD) and 434-452 (KLSE…KETN). Over residues 468 to 479 (EPVEEEDEDTYS) the composition is skewed to acidic residues. Residues 585-599 (SVTPHQHSFTPSTPS) are compositionally biased toward polar residues. C2H2-type zinc fingers lie at residues 609 to 632 (IECP…TMMH), 640 to 663 (LKCP…KEKH), and 695 to 719 (FRCE…SDKH). Residues 763-785 (WRCEVCDYETNVARNLRIHMTSE) form a C2H2-type 4; degenerate zinc finger. 3 consecutive C2H2-type zinc fingers follow at residues 913-937 (YQCK…TDKH), 969-991 (LKCN…TTNH), and 1017-1041 (YYCA…SVKH). Positions 1096–1132 (GEDTEGSAKSTSVAIGDDKDSSERDNTEAKKSSKDSV) are disordered. Residues 1111–1129 (GDDKDSSERDNTEAKKSSK) are compositionally biased toward basic and acidic residues. 2 C2H2-type zinc fingers span residues 1168-1191 (YQCP…LSQH) and 1197-1220 (ICCP…THLH). The disordered stretch occupies residues 1250 to 1340 (AASEKSERDT…EQQKKQQLSV (91 aa)). Residues 1277–1306 (VDEKSTPGTDESKPGMEIKSEEQKPPKESA) are compositionally biased toward basic and acidic residues. Residues 1322–1340 (TDSMPDQLNEQQKKQQLSV) are compositionally biased toward polar residues. 2 C2H2-type zinc fingers span residues 1348–1370 (YRCN…SQYH) and 1376–1399 (TMCS…EAGH). The interval 1442-1476 (YEMEQEGKASPVGSDSSSIPDDMGSEPKRTLPFRK) is disordered. 2 C2H2-type zinc fingers span residues 1492–1518 (YKCT…SHLH) and 1544–1568 (YKCS…SVLH). Disordered regions lie at residues 1577–1596 (LEPS…VNSP) and 1795–1843 (YKES…IASG). The span at 1580 to 1596 (SGNISSGNSVAGNVNSP) shows a compositional bias: low complexity. A compositionally biased stretch (basic and acidic residues) spans 1795-1830 (YKESEEISEKQEKPKQEFTNESEGLKENKDMKKPKS). The C2H2-type 14 zinc finger occupies 1886-1909 (LECGTCSKLFSNILILKSHQEHVH). The interval 1933 to 2013 (YPISPSSPET…PSAPPQVQLP (81 aa)) is disordered. Pro residues-rich tracts occupy residues 1940 to 1962 (PETP…PTPS) and 1980 to 2007 (LQAP…PSAP). DNA-binding regions (homeobox) lie at residues 2072-2131 (FKRP…RQRN) and 2169-2228 (KRSS…RKSY). Residues 2255 to 2279 (YQCKKCSVVFPRIFDLITHQKKQCY) form a C2H2-type 15; degenerate zinc finger. Disordered regions lie at residues 2278 to 2300 (CYKD…DASD) and 2318 to 2426 (SLAV…TPLQ). A compositionally biased stretch (acidic residues) spans 2281–2297 (DEDDDAQDESQTEDSMD). The segment covering 2318 to 2334 (SLAVTAASSGSGSSTPL) has biased composition (low complexity). The span at 2340 to 2357 (PEPEKASPKSESTEKPKP) shows a compositional bias: basic and acidic residues. Composition is skewed to low complexity over residues 2360–2373 (TISK…QSSK) and 2382–2413 (PSDP…TTPV). A C2H2-type 16 zinc finger spans residues 2436–2458 (YQCDQCTVAFPTLELWQEHQHMH). A compositionally biased stretch (polar residues) spans 2499–2509 (LAQMPPQTGSS). The tract at residues 2499–2553 (LAQMPPQTGSSHAAHPATVSGSMKRKLDDKEDNNCSEKEGGNSGEDQHRDKRLRT) is disordered. Residues 2523–2547 (RKLDDKEDNNCSEKEGGNSGEDQHR) show a composition bias toward basic and acidic residues. A DNA-binding region (homeobox 3) is located at residues 2548-2607 (DKRLRTTITPEQLEILYEKYLLDSNPTRKMLDHIAREVGLKKRVVQVWFQNTRARERKGQ). A C2H2-type 17 zinc finger spans residues 2618 to 2641 (KRCPFCRALFKAKSALESHIRSRH). Disordered regions lie at residues 2704–2788 (EMSP…PKPL) and 2820–2875 (FSEK…PGHK). Composition is skewed to polar residues over residues 2709-2718 (NLLSPSSFKA) and 2746-2773 (TSSI…TGSS). Residues 2820 to 2829 (FSEKDGDHDQ) are compositionally biased toward basic and acidic residues. Residues 2874 to 2933 (HKRFRTQMSNLQLKVLKACFSDYRTPTMQECEMLGNEIGLPKRVVQVWFQNARAKEKKFK) constitute a DNA-binding region (homeobox 4). The C2H2-type 18; degenerate zinc-finger motif lies at 2952–2976 (PECSLCGVKYSARLSIRDHIFSKQH). 2 disordered regions span residues 3060 to 3174 (PSSL…KHLK) and 3287 to 3343 (LQKQ…LDSK). Positions 3084 to 3104 (PTSATSSPALSLSSAPSKPLL) are enriched in low complexity. Residues 3105–3129 (QTPPPPPPPPPPPPPPPPPPPPPPS) show a composition bias toward pro residues. Basic and acidic residues predominate over residues 3159–3174 (IKEEELEANKPEKHLK). Residues 3271–3316 (ALLQQYQQYQQNLQDSLQKQQKQQQEQQQKQVQAKSSKAENDQQQN) adopt a coiled-coil conformation. A compositionally biased stretch (low complexity) spans 3287 to 3305 (LQKQQKQQQEQQQKQVQAK). The span at 3321-3343 (SETKEDRSSATESTKEEPQLDSK) shows a compositional bias: basic and acidic residues. A C2H2-type 19; degenerate zinc finger spans residues 3360–3384 (FICRKCQMMFTDEDAAVNHQKSFCY). Residues 3404 to 3428 (YQCLACDVAISGNEALSQHLQSSLH) form a C2H2-type 20 zinc finger. Disordered regions lie at residues 3449-3468 (HSVC…AASS) and 3518-3543 (TSGV…QKLE). The segment covering 3453–3468 (SPNPNTTSTSQSAASS) has biased composition (low complexity).

Belongs to the krueppel C2H2-type zinc-finger protein family.

It is found in the nucleus. Its function is as follows. May play a role in neural and muscle differentiation. May be involved in transcriptional regulation. The sequence is that of Zinc finger homeobox protein 4 (ZFHX4) from Gallus gallus (Chicken).